The following is a 449-amino-acid chain: Tubulin beta-2 chain (449 aa).

GTP is bound by residues glutamine 11 and glutamate 69. Glutamate 69 is a binding site for Mg(2+). Histidine 137 is subject to Methylhistidine. GTP contacts are provided by serine 138, glycine 142, threonine 143, glycine 144, asparagine 204, and asparagine 226.

It belongs to the tubulin family. As to quaternary structure, dimer of alpha and beta chains. A typical microtubule is a hollow water-filled tube with an outer diameter of 25 nm and an inner diameter of 15 nM. Alpha-beta heterodimers associate head-to-tail to form protofilaments running lengthwise along the microtubule wall with the beta-tubulin subunit facing the microtubule plus end conferring a structural polarity. Microtubules usually have 13 protofilaments but different protofilament numbers can be found in some organisms and specialized cells. It depends on Mg(2+) as a cofactor.

It localises to the cytoplasm. It is found in the cytoskeleton. In terms of biological role, tubulin is the major constituent of microtubules, a cylinder consisting of laterally associated linear protofilaments composed of alpha- and beta-tubulin heterodimers. Microtubules grow by the addition of GTP-tubulin dimers to the microtubule end, where a stabilizing cap forms. Below the cap, tubulin dimers are in GDP-bound state, owing to GTPase activity of alpha-tubulin. The chain is Tubulin beta-2 chain (tubC) from Emericella nidulans (strain FGSC A4 / ATCC 38163 / CBS 112.46 / NRRL 194 / M139) (Aspergillus nidulans).